A 652-amino-acid chain; its full sequence is MADSEGTESGDGTEAAERAGGWFLVEAVVDRTTGYQVSSDEEDNSIDTGEDLVDFIDTRRPGDGQEVPLALFVQQNAQDDAATVQALKRKYTCSPASSTCVSLVDSELSPRLDAIRIHRGQDRARRRLFEQDSGYGHTQVEIGASESQVPGDAQHEGGGESVQEAEEERGGGDGEAEATGNQETQAQEQAADILEVFKVSNLKAKLLYKFKDLFGLAFGELVRNFKSDKSICGDWVICAFGVYHAVAEAVKTLIQPICVYAHIQIQTCQWGMVILMLVRYKCGKSRETVAHSMGKLLNIPERQMLIEPPKIRSAPCALYWYRTAMGNASEVYGETPEWIVRQTVVGHAMQEAQFSLSMLVQWAYDNDITDESVLAYEYALLGNEDPNAAAFLASNCQAKYIKDAITMCKHYRRAEQAKMTMAQWITHRGRKVADTGDWKAIVKYLRYQQVEFVPFISALKLFLKGVPKKSCMVFYGPSDTGKSLFCMSLLNFLGGAVISYVNSSSHFWLSPLADTKVGLLDDATYQCWQYIDTYLRTVLDGNAISIDRKHRNLTQLKCPPLMITTNINPLEDPTFKYLHSRIVVFQFLHKCPLNSNGDPVYTLNNENWKSFFRRSWARIEGSDQQEEEEEEDEDGVTSRPFRCVPGEITRPL.

A Nuclear localization signal motif is present at residues 88–90 (KRK). A phosphoserine; by host mark is found at Ser-94, Ser-98, and Ser-109. A Nuclear export signal motif is present at residues 108–117 (LSPRLDAIRI). Positions 145-185 (SESQVPGDAQHEGGGESVQEAEEERGGGDGEAEATGNQETQ) are disordered. The interval 185–351 (QAQEQAADIL…QTVVGHAMQE (167 aa)) is DNA-binding region. One can recognise an SF3 helicase domain in the interval 450 to 600 (VEFVPFISAL…CPLNSNGDPV (151 aa)). ATP is bound at residue 476–483 (GPSDTGKS). A Glycyl lysine isopeptide (Lys-Gly) (interchain with G-Cter in SUMO) cross-link involves residue Lys-557. Residues 620-652 (EGSDQQEEEEEEDEDGVTSRPFRCVPGEITRPL) form a disordered region. A compositionally biased stretch (acidic residues) spans 623 to 635 (DQQEEEEEEDEDG).

The protein belongs to the papillomaviridae E1 protein family. In terms of assembly, can form hexamers. Interacts with E2 protein; this interaction increases E1 DNA binding specificity. Interacts with host DNA polymerase subunit POLA2. Interacts with host single stranded DNA-binding protein RPA1. Interacts with host TOP1; this interaction stimulates the enzymatic activity of TOP1. Post-translationally, phosphorylated. In terms of processing, sumoylated.

It localises to the host nucleus. The enzyme catalyses Couples ATP hydrolysis with the unwinding of duplex DNA by translocating in the 3'-5' direction.. It catalyses the reaction ATP + H2O = ADP + phosphate + H(+). ATP-dependent DNA 3'-5' helicase required for initiation of viral DNA replication. It forms a complex with the viral E2 protein. The E1-E2 complex binds to the replication origin which contains binding sites for both proteins. During the initial step, a dimer of E1 interacts with a dimer of protein E2 leading to a complex that binds the viral origin of replication with high specificity. Then, a second dimer of E1 displaces the E2 dimer in an ATP-dependent manner to form the E1 tetramer. Following this, two E1 monomers are added to each half of the site, which results in the formation of two E1 trimers on the viral ori. Subsequently, two hexamers will be created. The double hexamer acts as a bi-directional helicase machinery and unwinds the viral DNA and then recruits the host DNA polymerase to start replication. The chain is Replication protein E1 from Human papillomavirus type 61.